Reading from the N-terminus, the 212-residue chain is MNLLIMGLPGAGKGTQAAKIVEKFKVAHISTGDMFRAAMANQTEMGVLAKSYIDKGELVPDEVTNGIVKERLSQEDIKETGFLLDGYPRTIDQAHALDAILKDLGIDLDGVINIEVDPSCLLERLSGRIIHRQTGETFHKVFNPPANYNEEDYYQREDDKPETVKRRLDVNIAQGEPILSHYREQNLVHDIQGNQDINDVFSDIEKVLEKLK.

Residue 10–15 (GAGKGT) coordinates ATP. The interval 30–59 (STGDMFRAAMANQTEMGVLAKSYIDKGELV) is NMP. Residues T31, R36, 57-59 (ELV), 86-89 (GYPR), and Q93 contribute to the AMP site. Residues 127-159 (GRIIHRQTGETFHKVFNPPANYNEEDYYQREDD) form an LID region. ATP contacts are provided by residues R128 and 137–138 (TF). The AMP site is built by R156 and R167. Q195 is an ATP binding site.

This sequence belongs to the adenylate kinase family. As to quaternary structure, monomer.

Its subcellular location is the cytoplasm. The catalysed reaction is AMP + ATP = 2 ADP. It participates in purine metabolism; AMP biosynthesis via salvage pathway; AMP from ADP: step 1/1. Functionally, catalyzes the reversible transfer of the terminal phosphate group between ATP and AMP. Plays an important role in cellular energy homeostasis and in adenine nucleotide metabolism. The polypeptide is Adenylate kinase (Streptococcus gordonii (strain Challis / ATCC 35105 / BCRC 15272 / CH1 / DL1 / V288)).